Consider the following 129-residue polypeptide: Glycine cleavage system H protein (129 aa).

The Lipoyl-binding domain maps to 24–106 (TYTVGITEHA…YAGGWIFKIK (83 aa)). Lysine 65 carries the post-translational modification N6-lipoyllysine.

Belongs to the GcvH family. The glycine cleavage system is composed of four proteins: P, T, L and H. (R)-lipoate is required as a cofactor.

The glycine cleavage system catalyzes the degradation of glycine. The H protein shuttles the methylamine group of glycine from the P protein to the T protein. The sequence is that of Glycine cleavage system H protein from Shigella dysenteriae serotype 1 (strain Sd197).